Consider the following 101-residue polypeptide: Urease subunit beta (101 aa).

This sequence belongs to the urease beta subunit family. Heterotrimer of UreA (gamma), UreB (beta) and UreC (alpha) subunits. Three heterotrimers associate to form the active enzyme.

Its subcellular location is the cytoplasm. The catalysed reaction is urea + 2 H2O + H(+) = hydrogencarbonate + 2 NH4(+). It functions in the pathway nitrogen metabolism; urea degradation; CO(2) and NH(3) from urea (urease route): step 1/1. The polypeptide is Urease subunit beta (Ralstonia nicotianae (strain ATCC BAA-1114 / GMI1000) (Ralstonia solanacearum)).